The following is a 502-amino-acid chain: MTHHPDELEIWFLTGSQHLYGPEVIDQVAEHAARIVAALDASPHLPVRVVSKPVLTETDSIRRALLDATATDSCVGVIAWMHTFSPAKMWITGLDALRKPLLHLHTQANQALPWAEIDMDFMNLNQAAHGDREFASVQTRMGVARKTVTGHVEDPEVARRIGLWARAALGRHALAGMRLARFGDNMRNVAVTEGDKVEAERRFGVSVNTWGVNDLVAVVDEVADADVDKLCEEYADSYDVAAELLPSGERHESLRYGARIELGLRSFLTEGGFTAFTSNFEDLGGLRQLPGLAVQRLMADGYGFGGEGDWKTSVLLRTLKVVADGLPGGTSFMEDYTYHLVPGEERILGAHMLEVCPSIAEGRPSLEIHPLSIGGREDPVRLVFDAAPGPAVLLGLADLGERFRFVGNEVEVVAPTEPLPNLPVARAVWRPAPDLRTSTEAWLMAGGPHHTVLSTALGAEHLDDLAEMTGTELVLVDADTTIRGLAKELRWSAAYHRLAQGL.

Mn(2+) contacts are provided by glutamate 307, glutamate 334, histidine 351, and histidine 450.

This sequence belongs to the arabinose isomerase family. It depends on Mn(2+) as a cofactor.

The catalysed reaction is beta-L-arabinopyranose = L-ribulose. It functions in the pathway carbohydrate degradation; L-arabinose degradation via L-ribulose; D-xylulose 5-phosphate from L-arabinose (bacterial route): step 1/3. In terms of biological role, catalyzes the conversion of L-arabinose to L-ribulose. The chain is L-arabinose isomerase from Nocardioides sp. (strain ATCC BAA-499 / JS614).